Reading from the N-terminus, the 238-residue chain is Probable transcriptional regulatory protein YeeN (238 aa).

It belongs to the TACO1 family. YeeN subfamily.

The protein localises to the cytoplasm. This is Probable transcriptional regulatory protein YeeN from Salmonella choleraesuis (strain SC-B67).